The primary structure comprises 163 residues: ATP synthase subunit b', chloroplastic (163 aa).

A helical membrane pass occupies residues 26-46 (ATLPLMAVQILLFMVILNAVF).

The protein belongs to the ATPase B chain family. In terms of assembly, F-type ATPases have 2 components, F(1) - the catalytic core - and F(0) - the membrane proton channel. F(1) has five subunits: alpha(3), beta(3), gamma(1), delta(1), epsilon(1). F(0) has four main subunits: a(1), b(1), b'(1) and c(10-14). The alpha and beta chains form an alternating ring which encloses part of the gamma chain. F(1) is attached to F(0) by a central stalk formed by the gamma and epsilon chains, while a peripheral stalk is formed by the delta, b and b' chains.

The protein localises to the plastid. It is found in the chloroplast thylakoid membrane. Functionally, f(1)F(0) ATP synthase produces ATP from ADP in the presence of a proton or sodium gradient. F-type ATPases consist of two structural domains, F(1) containing the extramembraneous catalytic core and F(0) containing the membrane proton channel, linked together by a central stalk and a peripheral stalk. During catalysis, ATP synthesis in the catalytic domain of F(1) is coupled via a rotary mechanism of the central stalk subunits to proton translocation. In terms of biological role, component of the F(0) channel, it forms part of the peripheral stalk, linking F(1) to F(0). The b'-subunit is a diverged and duplicated form of b found in plants and photosynthetic bacteria. This Guillardia theta (Cryptophyte) protein is ATP synthase subunit b', chloroplastic.